A 271-amino-acid chain; its full sequence is Dirigent protein 17 (271 aa).

The span at 1–12 (MEDTGSIKQEAQ) shows a compositional bias: polar residues. Residues 1–22 (MEDTGSIKQEAQSHPPGIFEIP) form a disordered region. Asn-255 carries an N-linked (GlcNAc...) asparagine glycan.

This sequence belongs to the plant dirigent protein family. Homodimer.

The protein resides in the secreted. It is found in the extracellular space. The protein localises to the apoplast. Functionally, dirigent proteins impart stereoselectivity on the phenoxy radical-coupling reaction, yielding optically active lignans from two molecules of coniferyl alcohol in the biosynthesis of lignans, flavonolignans, and alkaloids and thus plays a central role in plant secondary metabolism. In Arabidopsis thaliana (Mouse-ear cress), this protein is Dirigent protein 17 (DIR17).